A 214-amino-acid chain; its full sequence is Probable nicotinate-nucleotide adenylyltransferase (214 aa).

It belongs to the NadD family.

It catalyses the reaction nicotinate beta-D-ribonucleotide + ATP + H(+) = deamido-NAD(+) + diphosphate. Its pathway is cofactor biosynthesis; NAD(+) biosynthesis; deamido-NAD(+) from nicotinate D-ribonucleotide: step 1/1. Catalyzes the reversible adenylation of nicotinate mononucleotide (NaMN) to nicotinic acid adenine dinucleotide (NaAD). The protein is Probable nicotinate-nucleotide adenylyltransferase of Buchnera aphidicola subsp. Acyrthosiphon pisum (strain Tuc7).